The sequence spans 455 residues: Probable glucarate dehydratase (455 aa).

Substrate is bound by residues His42, Thr113, Tyr160, and Lys215. Lys217 serves as the catalytic Proton acceptor. Positions 245, 276, and 299 each coordinate Mg(2+). 245–247 contacts substrate; the sequence is DPN. Residues Asn299, 349-351, His378, and Arg431 contribute to the substrate site; that span reads HSN. Catalysis depends on His349, which acts as the Proton acceptor.

This sequence belongs to the mandelate racemase/muconate lactonizing enzyme family. GlucD subfamily. Requires Mg(2+) as cofactor.

It catalyses the reaction D-glucarate = 5-dehydro-4-deoxy-D-glucarate + H2O. It functions in the pathway carbohydrate acid metabolism; D-glucarate degradation; 2,5-dioxopentanoate from D-glucarate: step 1/2. Catalyzes the dehydration of glucarate to 5-keto-4-deoxy-D-glucarate (5-kdGluc). This Bacillus subtilis (strain 168) protein is Probable glucarate dehydratase (gudD).